The sequence spans 519 residues: O-fucosyltransferase 31 (519 aa).

A helical; Signal-anchor for type II membrane protein membrane pass occupies residues 18-38; that stretch reads ALAGVFVLLFPILYPNLFSPL. Asparagine 131 is a glycosylation site (N-linked (GlcNAc...) asparagine). 302 to 304 is a binding site for substrate; that stretch reads HLR. Residues asparagine 373 and asparagine 474 are each glycosylated (N-linked (GlcNAc...) asparagine).

It belongs to the glycosyltransferase GT106 family.

The protein localises to the membrane. Its pathway is glycan metabolism. In Arabidopsis thaliana (Mouse-ear cress), this protein is O-fucosyltransferase 31.